We begin with the raw amino-acid sequence, 177 residues long: Large ribosomal subunit protein uL6 (177 aa).

Belongs to the universal ribosomal protein uL6 family. As to quaternary structure, part of the 50S ribosomal subunit.

This protein binds to the 23S rRNA, and is important in its secondary structure. It is located near the subunit interface in the base of the L7/L12 stalk, and near the tRNA binding site of the peptidyltransferase center. The sequence is that of Large ribosomal subunit protein uL6 from Cellvibrio japonicus (strain Ueda107) (Pseudomonas fluorescens subsp. cellulosa).